The chain runs to 175 residues: MATIAELKAVLKDTLEKRGALRQIKARIRAEVFNALDDQSEPRPPLCHENLLINELIREYLEFNKYKYSASVLTAEAGQPEVPLDRQFLVKELNIVEDANGKSVPLLYGIISHFLHRGKEESTQSTLPKVSLLSYPRQNLAKPSTERNQKDRIPEPGRMAGTSIEEPLVLQSIKR.

The segment at 1–104 (MATIAELKAV…IVEDANGKSV (104 aa)) is necessary and sufficient for homooligomerization and localization to centrosomes and pericentriolar satellites. A LisH domain is found at 49–81 (ENLLINELIREYLEFNKYKYSASVLTAEAGQPE). Residues 137 to 166 (RQNLAKPSTERNQKDRIPEPGRMAGTSIEE) are disordered. Basic and acidic residues predominate over residues 144-155 (STERNQKDRIPE).

Belongs to the CEP43 family. In terms of assembly, homooligomer; probably required for localization to centrosomes.

Its subcellular location is the cell projection. It is found in the cilium. The protein resides in the cytoplasm. It localises to the cytoskeleton. The protein localises to the cilium basal body. Its subcellular location is the microtubule organizing center. It is found in the centrosome. The protein resides in the cytoplasmic granule. It localises to the centriolar satellite. Functionally, involved in the biogenesis of cilia. Required for the recruitment of PLK1 to centrosomes and S phase progression. The chain is Centrosomal protein 20 (CEP20) from Gallus gallus (Chicken).